The primary structure comprises 406 residues: Inactive serine protease 35 (406 aa).

A signal peptide spans 1–17 (MLLWLIIFVSGWTLSLG). Residue Asn87 is glycosylated (N-linked (GlcNAc...) asparagine). The Peptidase S1 domain maps to 121 to 401 (VYGTDSRFSI…ICLWIHGNAA (281 aa)). Cysteines 151 and 167 form a disulfide. Basic residues predominate over residues 186–204 (LKMRNKGGRKKRRGSRRSR). Residues 186–248 (LKMRNKGGRK…RPSFQWTRVK (63 aa)) are disordered.

This sequence belongs to the peptidase S1 family.

It localises to the secreted. The chain is Inactive serine protease 35 (Prss35) from Rattus norvegicus (Rat).